The chain runs to 467 residues: Sexual differentiation process putative subtilase-type proteinase isp6 (467 aa).

The 91-residue stretch at tyrosine 86 to isoleucine 176 folds into the Inhibitor I9 domain. A Peptidase S8 domain is found at proline 186–glutamate 467. Active-site charge relay system residues include aspartate 221, histidine 253, and serine 409.

The protein belongs to the peptidase S8 family.

This chain is Sexual differentiation process putative subtilase-type proteinase isp6 (isp6), found in Schizosaccharomyces pombe (strain 972 / ATCC 24843) (Fission yeast).